The chain runs to 1159 residues: DNA-directed RNA polymerase subunit beta' (1159 aa).

Mg(2+)-binding residues include aspartate 398, aspartate 400, and aspartate 402. The Zn(2+) site is built by cysteine 741, cysteine 815, cysteine 822, and cysteine 825.

The protein belongs to the RNA polymerase beta' chain family. In terms of assembly, the RNAP catalytic core consists of 2 alpha, 1 beta, 1 beta' and 1 omega subunit. When a sigma factor is associated with the core the holoenzyme is formed, which can initiate transcription. Mg(2+) is required as a cofactor. It depends on Zn(2+) as a cofactor.

The catalysed reaction is RNA(n) + a ribonucleoside 5'-triphosphate = RNA(n+1) + diphosphate. In terms of biological role, DNA-dependent RNA polymerase catalyzes the transcription of DNA into RNA using the four ribonucleoside triphosphates as substrates. This chain is DNA-directed RNA polymerase subunit beta', found in Porphyromonas cangingivalis.